A 274-amino-acid polypeptide reads, in one-letter code: Ribosomal RNA small subunit methyltransferase A (274 aa).

6 residues coordinate S-adenosyl-L-methionine: N27, L29, G54, E75, D100, and N121.

The protein belongs to the class I-like SAM-binding methyltransferase superfamily. rRNA adenine N(6)-methyltransferase family. RsmA subfamily.

It localises to the cytoplasm. It catalyses the reaction adenosine(1518)/adenosine(1519) in 16S rRNA + 4 S-adenosyl-L-methionine = N(6)-dimethyladenosine(1518)/N(6)-dimethyladenosine(1519) in 16S rRNA + 4 S-adenosyl-L-homocysteine + 4 H(+). Specifically dimethylates two adjacent adenosines (A1518 and A1519) in the loop of a conserved hairpin near the 3'-end of 16S rRNA in the 30S particle. May play a critical role in biogenesis of 30S subunits. This is Ribosomal RNA small subunit methyltransferase A from Acinetobacter baylyi (strain ATCC 33305 / BD413 / ADP1).